Consider the following 561-residue polypeptide: Proline--tRNA ligase (561 aa).

Belongs to the class-II aminoacyl-tRNA synthetase family. ProS type 1 subfamily. In terms of assembly, homodimer.

Its subcellular location is the cytoplasm. The enzyme catalyses tRNA(Pro) + L-proline + ATP = L-prolyl-tRNA(Pro) + AMP + diphosphate. Its function is as follows. Catalyzes the attachment of proline to tRNA(Pro) in a two-step reaction: proline is first activated by ATP to form Pro-AMP and then transferred to the acceptor end of tRNA(Pro). As ProRS can inadvertently accommodate and process non-cognate amino acids such as alanine and cysteine, to avoid such errors it has two additional distinct editing activities against alanine. One activity is designated as 'pretransfer' editing and involves the tRNA(Pro)-independent hydrolysis of activated Ala-AMP. The other activity is designated 'posttransfer' editing and involves deacylation of mischarged Ala-tRNA(Pro). The misacylated Cys-tRNA(Pro) is not edited by ProRS. In Thermosipho africanus (strain TCF52B), this protein is Proline--tRNA ligase.